The sequence spans 741 residues: Catalase-peroxidase 2 (741 aa).

A signal peptide spans 1–28 (MQKKRIGKSVVAALAIIAMSAGTVAAWA). Positions 107 to 228 (WHGAGTYRTY…LAATQMGLIY (122 aa)) form a cross-link, tryptophyl-tyrosyl-methioninium (Trp-Tyr) (with M-254). Histidine 108 functions as the Proton acceptor in the catalytic mechanism. The tryptophyl-tyrosyl-methioninium (Tyr-Met) (with W-107) cross-link spans 228–254 (YVNPEGPNGNPDPVAAAKDIREAFGRM). Histidine 269 lines the heme b pocket.

Belongs to the peroxidase family. Peroxidase/catalase subfamily. Homodimer or homotetramer. Heme b serves as cofactor. In terms of processing, formation of the three residue Trp-Tyr-Met cross-link is important for the catalase, but not the peroxidase activity of the enzyme.

The catalysed reaction is H2O2 + AH2 = A + 2 H2O. The enzyme catalyses 2 H2O2 = O2 + 2 H2O. Bifunctional enzyme with both catalase and broad-spectrum peroxidase activity. In Burkholderia ambifaria (strain MC40-6), this protein is Catalase-peroxidase 2.